Consider the following 171-residue polypeptide: Sec-independent protein translocase protein TatB (171 aa).

A helical transmembrane segment spans residues 1 to 21 (MFDIGFSELLLVFIIGLVVLG). The tract at residues 117-171 (KDNETAHEGVTPAAAQTQASSPEQKPETTPEPVVKPAADAEPKTAAPSPSSSDKP) is disordered. Residues 130 to 139 (AAQTQASSPE) are compositionally biased toward polar residues.

It belongs to the TatB family. In terms of assembly, the Tat system comprises two distinct complexes: a TatABC complex, containing multiple copies of TatA, TatB and TatC subunits, and a separate TatA complex, containing only TatA subunits. Substrates initially bind to the TatABC complex, which probably triggers association of the separate TatA complex to form the active translocon.

The protein resides in the cell inner membrane. In terms of biological role, part of the twin-arginine translocation (Tat) system that transports large folded proteins containing a characteristic twin-arginine motif in their signal peptide across membranes. Together with TatC, TatB is part of a receptor directly interacting with Tat signal peptides. TatB may form an oligomeric binding site that transiently accommodates folded Tat precursor proteins before their translocation. This chain is Sec-independent protein translocase protein TatB, found in Escherichia coli O6:K15:H31 (strain 536 / UPEC).